Reading from the N-terminus, the 339-residue chain is Methionyl-tRNA formyltransferase (339 aa).

110–113 (SLLP) contacts (6S)-5,6,7,8-tetrahydrofolate.

Belongs to the Fmt family.

It catalyses the reaction L-methionyl-tRNA(fMet) + (6R)-10-formyltetrahydrofolate = N-formyl-L-methionyl-tRNA(fMet) + (6S)-5,6,7,8-tetrahydrofolate + H(+). In terms of biological role, attaches a formyl group to the free amino group of methionyl-tRNA(fMet). The formyl group appears to play a dual role in the initiator identity of N-formylmethionyl-tRNA by promoting its recognition by IF2 and preventing the misappropriation of this tRNA by the elongation apparatus. The sequence is that of Methionyl-tRNA formyltransferase from Prochlorococcus marinus (strain SARG / CCMP1375 / SS120).